We begin with the raw amino-acid sequence, 371 residues long: Probable tRNA sulfurtransferase (371 aa).

In terms of domain architecture, THUMP spans asparagine 54 to valine 156. ATP is bound by residues leucine 174–phenylalanine 175, asparagine 199–phenylalanine 200, lysine 254, glycine 276, and glutamine 285.

This sequence belongs to the ThiI family.

The protein resides in the cytoplasm. It carries out the reaction [ThiI sulfur-carrier protein]-S-sulfanyl-L-cysteine + a uridine in tRNA + 2 reduced [2Fe-2S]-[ferredoxin] + ATP + H(+) = [ThiI sulfur-carrier protein]-L-cysteine + a 4-thiouridine in tRNA + 2 oxidized [2Fe-2S]-[ferredoxin] + AMP + diphosphate. The catalysed reaction is [ThiS sulfur-carrier protein]-C-terminal Gly-Gly-AMP + S-sulfanyl-L-cysteinyl-[cysteine desulfurase] + AH2 = [ThiS sulfur-carrier protein]-C-terminal-Gly-aminoethanethioate + L-cysteinyl-[cysteine desulfurase] + A + AMP + 2 H(+). It participates in cofactor biosynthesis; thiamine diphosphate biosynthesis. In terms of biological role, catalyzes the ATP-dependent transfer of a sulfur to tRNA to produce 4-thiouridine in position 8 of tRNAs, which functions as a near-UV photosensor. Also catalyzes the transfer of sulfur to the sulfur carrier protein ThiS, forming ThiS-thiocarboxylate. This is a step in the synthesis of thiazole, in the thiamine biosynthesis pathway. The sulfur is donated as persulfide by IscS. The protein is Probable tRNA sulfurtransferase of Saccharolobus solfataricus (strain ATCC 35092 / DSM 1617 / JCM 11322 / P2) (Sulfolobus solfataricus).